Reading from the N-terminus, the 122-residue chain is Large ribosomal subunit protein uL22 (122 aa).

The segment at 103–122 (VEGKEMKSSKSHKKNQAEGK) is disordered.

Belongs to the universal ribosomal protein uL22 family. As to quaternary structure, part of the 50S ribosomal subunit.

Its function is as follows. This protein binds specifically to 23S rRNA; its binding is stimulated by other ribosomal proteins, e.g. L4, L17, and L20. It is important during the early stages of 50S assembly. It makes multiple contacts with different domains of the 23S rRNA in the assembled 50S subunit and ribosome. Functionally, the globular domain of the protein is located near the polypeptide exit tunnel on the outside of the subunit, while an extended beta-hairpin is found that lines the wall of the exit tunnel in the center of the 70S ribosome. This chain is Large ribosomal subunit protein uL22, found in Helicobacter pylori (strain P12).